The sequence spans 115 residues: Kunitz-type trypsin inhibitor 1 (115 aa).

The protein belongs to the protease inhibitor I3 (leguminous Kunitz-type inhibitor) family.

Functionally, exhibits Kunitz trypsin protease inhibitor activity. The chain is Kunitz-type trypsin inhibitor 1 from Selenicereus undatus (Pitahaya).